A 420-amino-acid polypeptide reads, in one-letter code: Tyrosine--tRNA ligase (420 aa).

Tyr33 lines the L-tyrosine pocket. The 'HIGH' region motif lies at 38-47 (PTADSLHIGH). Residues Tyr168 and Gln172 each coordinate L-tyrosine. Positions 231 to 235 (KFGKT) match the 'KMSKS' region motif. An ATP-binding site is contributed by Lys234. The 67-residue stretch at 353–419 (MLLVDALIKV…GKKNYYLVKL (67 aa)) folds into the S4 RNA-binding domain.

It belongs to the class-I aminoacyl-tRNA synthetase family. TyrS type 1 subfamily. In terms of assembly, homodimer.

The protein resides in the cytoplasm. It carries out the reaction tRNA(Tyr) + L-tyrosine + ATP = L-tyrosyl-tRNA(Tyr) + AMP + diphosphate + H(+). Functionally, catalyzes the attachment of tyrosine to tRNA(Tyr) in a two-step reaction: tyrosine is first activated by ATP to form Tyr-AMP and then transferred to the acceptor end of tRNA(Tyr). This is Tyrosine--tRNA ligase from Desulfitobacterium hafniense (strain DSM 10664 / DCB-2).